A 372-amino-acid polypeptide reads, in one-letter code: GDSL esterase/lipase At1g54020 (372 aa).

Residues 1-26 form the signal peptide; it reads MECSSVSVLGILLVFPLLHNLVTISG. Serine 40 functions as the Nucleophile in the catalytic mechanism. N-linked (GlcNAc...) asparagine glycosylation is found at asparagine 161 and asparagine 280. Active-site residues include aspartate 314 and histidine 317.

Belongs to the 'GDSL' lipolytic enzyme family.

It localises to the secreted. The protein is GDSL esterase/lipase At1g54020 of Arabidopsis thaliana (Mouse-ear cress).